A 601-amino-acid polypeptide reads, in one-letter code: Multidrug and toxin extrusion protein 2 (601 aa).

Residues 1 to 62 are Cytoplasmic-facing; it reads MNTAFAGFDE…PRGFWDEARA (62 aa). A helical membrane pass occupies residues 63–83; it reads LFVLSGPLFLFQVLNFLTYVV. The Extracellular segment spans residues 84 to 95; sequence GTVFCGHLGKVE. A helical transmembrane segment spans residues 96–116; it reads LASVTLGVAFVNVCGVSVGAG. Residues 117 to 145 lie on the Cytoplasmic side of the membrane; sequence LSSACDTLMSQSFGSPNKKHVGVILQRGS. The helical transmembrane segment at 146–166 threads the bilayer; sequence LILLLCCLPCWALFLNTQHIL. Residues 167 to 182 are Extracellular-facing; it reads LLFRQDPAVSRLTQDY. A helical membrane pass occupies residues 183–203; that stretch reads AMIFIPGLPAIFLYSLLAKYL. Over 204–212 the chain is Cytoplasmic; it reads QNQGIVWPQ. The chain crosses the membrane as a helical span at residues 213 to 233; sequence VLSGVVGNCVNGVANYALVSV. Residues 234–241 lie on the Extracellular side of the membrane; it reads LNLGVRGS. The helical transmembrane segment at 242 to 262 threads the bilayer; sequence AYANTISQFVQAAFLFLHIVL. Residues 263-281 lie on the Cytoplasmic side of the membrane; it reads KKLHLETWEGWSSQCLRDW. The chain crosses the membrane as a helical span at residues 282-301; sequence GPFLSLAIPSMLMMCVEWWA. Topologically, residues 302 to 320 are extracellular; it reads YEIGSFLMGLLGVVDLSGQ. Residues 321–341 form a helical membrane-spanning segment; sequence AIIYEVATVVYMIPMGLGMAV. At 342–361 the chain is on the cytoplasmic side; that stretch reads CVRVGTALGAADTLQAKRSA. A helical membrane pass occupies residues 362–382; that stretch reads VSGLLCTAGTSLVVGTLLGLL. The Extracellular segment spans residues 383-402; that stretch reads NSQLGYIFTSDEEVIALVNQ. The helical transmembrane segment at 403–423 threads the bilayer; sequence VLPIYIVFQLVEAVCCVFGGV. The Cytoplasmic segment spans residues 424–437; that stretch reads LRGTGKQAFGAIVN. Residues 438 to 458 traverse the membrane as a helical segment; that stretch reads AIMYYIVGLPLGIVLTFVVGM. A topological domain (extracellular) is located at residue Arg459. A helical transmembrane segment spans residues 460-480; sequence IMGLWLGMLTCIFLAAVTFVV. The Cytoplasmic segment spans residues 481-577; that stretch reads YAVQLDWKLA…LSVRQLLFRR (97 aa). A helical membrane pass occupies residues 578–598; it reads GAALAASVAVLMAGLLVRVLT. Topologically, residues 599–601 are extracellular; the sequence is TGY.

The protein belongs to the multi antimicrobial extrusion (MATE) (TC 2.A.66.1) family. As to expression, expressed in renal cortical tissues.

It localises to the cell membrane. The protein localises to the apical cell membrane. The catalysed reaction is thiamine(out) + H(+)(in) = thiamine(in) + H(+)(out). The enzyme catalyses estrone 3-sulfate(in) + H(+)(out) = estrone 3-sulfate(out) + H(+)(in). It catalyses the reaction creatinine(in) + H(+)(out) = creatinine(out) + H(+)(in). In terms of biological role, multidrug efflux pump that functions as a H(+)/organic cation antiporter. Mediates the efflux of cationic compounds, such as the model cations, tetraethylammonium (TEA) and 1-methyl-4-phenylpyridinium (MPP+), the platinum-based drug oxaliplatin or weak bases that are positively charged at physiological pH, cimetidine or the antidiabetic drug metformin. Mediates the efflux of the endogenous compounds creatinine, thiamine and estrone-3-sulfate. Plays a physiological role in the excretion of drugs, toxins and endogenous metabolites through the kidney. This Oryctolagus cuniculus (Rabbit) protein is Multidrug and toxin extrusion protein 2 (SLC47A2).